A 311-amino-acid chain; its full sequence is tRNA-cytidine(32) 2-sulfurtransferase (311 aa).

The short motif at 47–52 (SGGKDS) is the PP-loop motif element. 3 residues coordinate [4Fe-4S] cluster: cysteine 122, cysteine 125, and cysteine 213.

The protein belongs to the TtcA family. Homodimer. The cofactor is Mg(2+). [4Fe-4S] cluster is required as a cofactor.

Its subcellular location is the cytoplasm. It carries out the reaction cytidine(32) in tRNA + S-sulfanyl-L-cysteinyl-[cysteine desulfurase] + AH2 + ATP = 2-thiocytidine(32) in tRNA + L-cysteinyl-[cysteine desulfurase] + A + AMP + diphosphate + H(+). Its pathway is tRNA modification. Its function is as follows. Catalyzes the ATP-dependent 2-thiolation of cytidine in position 32 of tRNA, to form 2-thiocytidine (s(2)C32). The sulfur atoms are provided by the cysteine/cysteine desulfurase (IscS) system. This Salmonella heidelberg (strain SL476) protein is tRNA-cytidine(32) 2-sulfurtransferase.